A 450-amino-acid chain; its full sequence is 23S rRNA (uracil(1939)-C(5))-methyltransferase RlmD (450 aa).

One can recognise a TRAM domain in the interval serine 12–lysine 70. Cysteine 83, cysteine 89, cysteine 92, and cysteine 171 together coordinate [4Fe-4S] cluster. The S-adenosyl-L-methionine site is built by glutamine 283, phenylalanine 312, asparagine 317, glutamate 333, aspartate 360, and aspartate 380. Catalysis depends on cysteine 406, which acts as the Nucleophile.

The protein belongs to the class I-like SAM-binding methyltransferase superfamily. RNA M5U methyltransferase family. RlmD subfamily.

It carries out the reaction uridine(1939) in 23S rRNA + S-adenosyl-L-methionine = 5-methyluridine(1939) in 23S rRNA + S-adenosyl-L-homocysteine + H(+). Its function is as follows. Catalyzes the formation of 5-methyl-uridine at position 1939 (m5U1939) in 23S rRNA. The sequence is that of 23S rRNA (uracil(1939)-C(5))-methyltransferase RlmD from Shewanella baltica (strain OS223).